The primary structure comprises 208 residues: Ribosomal RNA large subunit methyltransferase E (208 aa).

The S-adenosyl-L-methionine site is built by Gly-63, Trp-65, Asp-83, Asp-99, and Asp-124. The active-site Proton acceptor is Lys-164.

It belongs to the class I-like SAM-binding methyltransferase superfamily. RNA methyltransferase RlmE family.

Its subcellular location is the cytoplasm. The enzyme catalyses uridine(2552) in 23S rRNA + S-adenosyl-L-methionine = 2'-O-methyluridine(2552) in 23S rRNA + S-adenosyl-L-homocysteine + H(+). Its function is as follows. Specifically methylates the uridine in position 2552 of 23S rRNA at the 2'-O position of the ribose in the fully assembled 50S ribosomal subunit. The protein is Ribosomal RNA large subunit methyltransferase E of Salmonella choleraesuis (strain SC-B67).